Consider the following 155-residue polypeptide: SsrA-binding protein (155 aa).

The disordered stretch occupies residues 136–155 (RESLKRRQDQRDMQRAMKNY).

Belongs to the SmpB family.

The protein resides in the cytoplasm. Its function is as follows. Required for rescue of stalled ribosomes mediated by trans-translation. Binds to transfer-messenger RNA (tmRNA), required for stable association of tmRNA with ribosomes. tmRNA and SmpB together mimic tRNA shape, replacing the anticodon stem-loop with SmpB. tmRNA is encoded by the ssrA gene; the 2 termini fold to resemble tRNA(Ala) and it encodes a 'tag peptide', a short internal open reading frame. During trans-translation Ala-aminoacylated tmRNA acts like a tRNA, entering the A-site of stalled ribosomes, displacing the stalled mRNA. The ribosome then switches to translate the ORF on the tmRNA; the nascent peptide is terminated with the 'tag peptide' encoded by the tmRNA and targeted for degradation. The ribosome is freed to recommence translation, which seems to be the essential function of trans-translation. In Nostoc sp. (strain PCC 7120 / SAG 25.82 / UTEX 2576), this protein is SsrA-binding protein.